Consider the following 124-residue polypeptide: Small ribosomal subunit protein bS6 (124 aa).

Residues 99–124 are disordered; that stretch reads PLPAPRIVPGSEPEPVEQQEAAAVEA. Positions 114 to 124 are enriched in low complexity; the sequence is VEQQEAAAVEA.

This sequence belongs to the bacterial ribosomal protein bS6 family.

Its function is as follows. Binds together with bS18 to 16S ribosomal RNA. The polypeptide is Small ribosomal subunit protein bS6 (Prochlorococcus marinus (strain MIT 9303)).